Reading from the N-terminus, the 85-residue chain is Phosphocarrier protein HPr (85 aa).

One can recognise an HPr domain in the interval 1 to 85 (MYEKQVEITA…HLVALMDQLH (85 aa)). H15 serves as the catalytic Pros-phosphohistidine intermediate.

Belongs to the HPr family.

It is found in the cytoplasm. In terms of biological role, general (non sugar-specific) component of the phosphoenolpyruvate-dependent sugar phosphotransferase system (sugar PTS). This major carbohydrate active-transport system catalyzes the phosphorylation of incoming sugar substrates concomitantly with their translocation across the cell membrane. The phosphoryl group from phosphoenolpyruvate (PEP) is transferred to the phosphoryl carrier protein HPr by enzyme I. Phospho-HPr then transfers it to the PTS EIIA domain. The chain is Phosphocarrier protein HPr (ptsH) from Vibrio cholerae serotype O1 (strain ATCC 39315 / El Tor Inaba N16961).